The chain runs to 469 residues: ATP-dependent protease ATPase subunit HslU (469 aa).

ATP-binding positions include I21, 63–68 (GVGKTE), D282, E347, and R419.

The protein belongs to the ClpX chaperone family. HslU subfamily. In terms of assembly, a double ring-shaped homohexamer of HslV is capped on each side by a ring-shaped HslU homohexamer. The assembly of the HslU/HslV complex is dependent on binding of ATP.

It localises to the cytoplasm. Its function is as follows. ATPase subunit of a proteasome-like degradation complex; this subunit has chaperone activity. The binding of ATP and its subsequent hydrolysis by HslU are essential for unfolding of protein substrates subsequently hydrolyzed by HslV. HslU recognizes the N-terminal part of its protein substrates and unfolds these before they are guided to HslV for hydrolysis. This is ATP-dependent protease ATPase subunit HslU from Petrotoga mobilis (strain DSM 10674 / SJ95).